The chain runs to 597 residues: Cytosolic phospholipase A2 gamma (597 aa).

Residues 1 to 597 (MELSSGVCPA…FKKSHNISKD (597 aa)) form the PLA2c domain. S83 acts as the Nucleophile in catalysis. The active-site Proton acceptor is the D417. Residues 576 to 597 (RVKDPQGSQTVEFKKSHNISKD) form a disordered region. Residues 587-597 (EFKKSHNISKD) show a composition bias toward basic and acidic residues.

In terms of tissue distribution, highly expressed in ovary, where it localizes to oocytes in preantral and antral stage follicles (at protein level). Not detected in other tissues tested.

It localises to the nucleus. It is found in the nucleoplasm. Its subcellular location is the nucleus envelope. The protein localises to the cytoplasm. The protein resides in the cell cortex. It localises to the cytoskeleton. It is found in the spindle. It catalyses the reaction a 1,2-diacyl-sn-glycero-3-phosphocholine + H2O = a 1-acyl-sn-glycero-3-phosphocholine + a fatty acid + H(+). The enzyme catalyses a 1-O-alkyl-2-acyl-sn-glycero-3-phosphocholine + H2O = a 1-O-alkyl-sn-glycero-3-phosphocholine + a fatty acid + H(+). It carries out the reaction 1,2-dihexadecanoyl-sn-glycero-3-phosphocholine + H2O = 1-hexadecanoyl-sn-glycero-3-phosphocholine + hexadecanoate + H(+). The catalysed reaction is 1-hexadecanoyl-2-(9Z-octadecenoyl)-sn-glycero-3-phosphocholine + H2O = 1-hexadecanoyl-sn-glycero-3-phosphocholine + (9Z)-octadecenoate + H(+). It catalyses the reaction 1-hexadecanoyl-2-(9Z,12Z-octadecadienoyl)-sn-glycero-3-phosphocholine + H2O = (9Z,12Z)-octadecadienoate + 1-hexadecanoyl-sn-glycero-3-phosphocholine + H(+). The enzyme catalyses 1-hexadecanoyl-2-(5Z,8Z,11Z,14Z-eicosatetraenoyl)-sn-glycero-3-phosphocholine + H2O = 1-hexadecanoyl-sn-glycero-3-phosphocholine + (5Z,8Z,11Z,14Z)-eicosatetraenoate + H(+). It carries out the reaction 1-O-hexadecyl-2-(5Z,8Z,11Z,14Z)-eicosatetraenoyl-sn-glycero-3-phosphocholine + H2O = 1-O-hexadecyl-sn-glycero-3-phosphocholine + (5Z,8Z,11Z,14Z)-eicosatetraenoate + H(+). The catalysed reaction is 1-hexadecanoyl-2-(5Z,8Z,11Z,14Z-eicosatetraenoyl)-sn-glycero-3-phosphocholine + H2O = 2-(5Z,8Z,11Z,14Z)-eicosatetraenoyl-sn-glycero-3-phosphocholine + hexadecanoate + H(+). It catalyses the reaction a 1-acyl-sn-glycero-3-phosphocholine + H2O = sn-glycerol 3-phosphocholine + a fatty acid + H(+). The enzyme catalyses 1-hexadecanoyl-sn-glycero-3-phosphocholine + H2O = sn-glycerol 3-phosphocholine + hexadecanoate + H(+). It carries out the reaction 2 1-hexadecanoyl-sn-glycero-3-phosphocholine = 1,2-dihexadecanoyl-sn-glycero-3-phosphocholine + sn-glycerol 3-phosphocholine. The catalysed reaction is 1-hexadecanoyl-sn-glycero-3-phosphoethanolamine + 1-hexadecanoyl-sn-glycero-3-phosphocholine = 1,2-dihexadecanoyl-sn-glycero-3-phosphoethanolamine + sn-glycerol 3-phosphocholine. It catalyses the reaction 1-hexadecanoyl-sn-glycero-3-phosphoethanolamine + 1-hexadecanoyl-sn-glycero-3-phosphocholine = sn-glycero-3-phosphoethanolamine + 1,2-dihexadecanoyl-sn-glycero-3-phosphocholine. The enzyme catalyses 2 1-hexadecanoyl-sn-glycero-3-phosphoethanolamine = 1,2-dihexadecanoyl-sn-glycero-3-phosphoethanolamine + sn-glycero-3-phosphoethanolamine. It carries out the reaction 1-O-hexadecyl-sn-glycero-3-phosphocholine + 1-hexadecanoyl-sn-glycero-3-phosphocholine = 1-O-hexadecyl-2-hexadecanoyl-sn-glycero-3-phosphocholine + sn-glycerol 3-phosphocholine. The catalysed reaction is a 1-O-(1Z-alkenyl)-sn-glycero-3-phosphoethanolamine + 1-hexadecanoyl-sn-glycero-3-phosphocholine = 1-O-(1Z)-alkenyl-2-hexadecanoyl-sn-glycero-3-phosphoethanolamine + sn-glycerol 3-phosphocholine. It catalyses the reaction 1-O-hexadecyl-sn-glycero-3-phosphocholine + 1-hexadecanoyl-sn-glycero-3-phosphoethanolamine = 1-O-hexadecyl-2-hexadecanoyl-sn-glycero-3-phosphocholine + sn-glycero-3-phosphoethanolamine. The enzyme catalyses 1-octadecanoyl-2-(5Z,8Z,11Z,14Z)-eicosatetraenoyl-sn-glycero-3-phosphoethanolamine + 1-hexadecanoyl-sn-glycero-3-phosphocholine = 1-octadecanoyl-sn-glycero-3-phosphoethanolamine + 1-hexadecanoyl-2-(5Z,8Z,11Z,14Z-eicosatetraenoyl)-sn-glycero-3-phosphocholine. It carries out the reaction 1-octadecanoyl-2-(5Z,8Z,11Z,14Z)-eicosatetraenoyl-sn-glycero-3-phosphoethanolamine + 1-O-hexadecyl-sn-glycero-3-phosphocholine = 1-octadecanoyl-sn-glycero-3-phosphoethanolamine + 1-O-hexadecyl-2-(5Z,8Z,11Z,14Z)-eicosatetraenoyl-sn-glycero-3-phosphocholine. The catalysed reaction is 1-hexadecanoyl-2-(9Z,12Z-octadecadienoyl)-sn-glycero-3-phosphocholine + a 1-O-(1Z-alkenyl)-sn-glycero-3-phosphoethanolamine = 1-O-(1Z-alkenyl)-2-(9Z,12Z-octadecadienoyl)-sn-glycero-3-phosphoethanolamine + 1-hexadecanoyl-sn-glycero-3-phosphocholine. It catalyses the reaction 1-hexadecanoyl-2-(5Z,8Z,11Z,14Z-eicosatetraenoyl)-sn-glycero-3-phosphocholine + a 1-O-(1Z-alkenyl)-sn-glycero-3-phosphoethanolamine = 1-O-(1Z)-alkenyl-2-(5Z,8Z,11Z,14Z)-eicosatetraenoyl-sn-glycero-3-phosphoethanolamine + 1-hexadecanoyl-sn-glycero-3-phosphocholine. Its function is as follows. Calcium-independent phospholipase, lysophospholipase and O-acyltransferase involved in phospholipid remodeling. Preferentially hydrolyzes the ester bond of the fatty acyl group attached at sn-2 position of phospholipids with choline and ethanolamine head groups, producing lysophospholipids that are used in deacylation-reacylation cycles. Transfers the sn-1 fatty acyl from one lysophospholipid molecule to the sn-2 position of another lysophospholipid to form diacyl, alkylacyl and alkenylacyl glycerophospholipids. Cleaves ester bonds but not alkyl or alkenyl ether bonds at the sn-1 position of lysophospholipids. Catalyzes sn-2 fatty acyl transfer from phospholipids to the sn-2 position of 1-O-alkyl or 1-O-alkenyl lysophospholipids with lower efficiency. The polypeptide is Cytosolic phospholipase A2 gamma (Mus musculus (Mouse)).